Consider the following 239-residue polypeptide: Small ribosomal subunit protein eS6B (239 aa).

Serine 148, serine 235, and serine 236 each carry phosphoserine.

It belongs to the eukaryotic ribosomal protein eS6 family. In terms of assembly, component of the small ribosomal subunit (SSU). Mature yeast ribosomes consist of a small (40S) and a large (60S) subunit. The 40S small subunit contains 1 molecule of ribosomal RNA (18S rRNA) and at least 33 different proteins. The large 60S subunit contains 3 rRNA molecules (25S, 5.8S and 5S rRNA) and at least 46 different proteins. Interacts with snoRNA U3. uS11 interacts with MPP10. Component of the ribosomal small subunit (SSU) processome composed of at least 40 protein subunits and snoRNA U3.

The protein resides in the cytoplasm. Component of the ribosome, a large ribonucleoprotein complex responsible for the synthesis of proteins in the cell. The small ribosomal subunit (SSU) binds messenger RNAs (mRNAs) and translates the encoded message by selecting cognate aminoacyl-transfer RNA (tRNA) molecules. The large subunit (LSU) contains the ribosomal catalytic site termed the peptidyl transferase center (PTC), which catalyzes the formation of peptide bonds, thereby polymerizing the amino acids delivered by tRNAs into a polypeptide chain. The nascent polypeptides leave the ribosome through a tunnel in the LSU and interact with protein factors that function in enzymatic processing, targeting, and the membrane insertion of nascent chains at the exit of the ribosomal tunnel. eS6 is involved in nucleolar processing of pre-18S ribosomal RNA and ribosome assembly. This chain is Small ribosomal subunit protein eS6B (rps602), found in Schizosaccharomyces pombe (strain 972 / ATCC 24843) (Fission yeast).